Here is a 419-residue protein sequence, read N- to C-terminus: Transcription termination factor Rho (419 aa).

Residues 48–123 (DIFGDGVLEI…LKVNEVNFDK (76 aa)) enclose the Rho RNA-BD domain. RNA-binding regions lie at residues 61–66 (GFGFLR), 78–80 (DIY), and 108–110 (ERY). Residues 169-174 (GRGQRG), 181-186 (KAGKTM), and Arg-212 each bind ATP. Residues 284–288 (VLTGG) form an RNA-binding 2 region.

This sequence belongs to the Rho family. As to quaternary structure, homohexamer. The homohexamer assembles into an open ring structure.

In terms of biological role, facilitates transcription termination by a mechanism that involves Rho binding to the nascent RNA, activation of Rho's RNA-dependent ATPase activity, and release of the mRNA from the DNA template. This is Transcription termination factor Rho from Escherichia coli O157:H7.